The chain runs to 119 residues: Ribosome-binding factor A (119 aa).

This sequence belongs to the RbfA family. Monomer. Binds 30S ribosomal subunits, but not 50S ribosomal subunits or 70S ribosomes.

Its subcellular location is the cytoplasm. One of several proteins that assist in the late maturation steps of the functional core of the 30S ribosomal subunit. Associates with free 30S ribosomal subunits (but not with 30S subunits that are part of 70S ribosomes or polysomes). Required for efficient processing of 16S rRNA. May interact with the 5'-terminal helix region of 16S rRNA. This is Ribosome-binding factor A from Citrifermentans bemidjiense (strain ATCC BAA-1014 / DSM 16622 / JCM 12645 / Bem) (Geobacter bemidjiensis).